Reading from the N-terminus, the 267-residue chain is Mitochondrial S-adenosylmethionine carrier protein (267 aa).

Solcar repeat units lie at residues 4-77, 86-168, and 177-265; these read REFT…TKSV, LAPI…LKAV, and LDSW…VRRT. The next 6 helical transmembrane spans lie at 5 to 25, 49 to 69, 85 to 105, 142 to 162, 182 to 202, and 238 to 258; these read EFTA…LTLF, IYAG…AFFV, NLAP…ACLI, RGYG…FPLW, AAVC…PLDV, and FAGS…FLGA.

It belongs to the mitochondrial carrier (TC 2.A.29) family.

The protein resides in the mitochondrion inner membrane. It carries out the reaction S-adenosyl-L-homocysteine(out) + S-adenosyl-L-methionine(in) = S-adenosyl-L-homocysteine(in) + S-adenosyl-L-methionine(out). Functionally, mitochondrial S-adenosyl-L-methionine/S-adenosyl-L-homocysteine antiporter. Mediates the exchange of cytosolic S-adenosyl-L-methionine, the predominant methyl-group donor for macromolecule methylation processes, for mitochondrial S-adenosylhomocysteine(SAH), a by-product of methylation reactions. The sequence is that of Mitochondrial S-adenosylmethionine carrier protein (slc25a26) from Danio rerio (Zebrafish).